Consider the following 342-residue polypeptide: Succinylglutamate desuccinylase (342 aa).

Zn(2+)-binding residues include His63, Glu66, and His155. Glu219 is an active-site residue.

Belongs to the AspA/AstE family. Succinylglutamate desuccinylase subfamily. The cofactor is Zn(2+).

It catalyses the reaction N-succinyl-L-glutamate + H2O = L-glutamate + succinate. The protein operates within amino-acid degradation; L-arginine degradation via AST pathway; L-glutamate and succinate from L-arginine: step 5/5. In terms of biological role, transforms N(2)-succinylglutamate into succinate and glutamate. The protein is Succinylglutamate desuccinylase of Vibrio cholerae serotype O1 (strain ATCC 39315 / El Tor Inaba N16961).